We begin with the raw amino-acid sequence, 370 residues long: Peptidyl-prolyl cis-trans isomerase D (370 aa).

Serine 5 carries the phosphoserine modification. In terms of domain architecture, PPIase cyclophilin-type spans 19-183 (FFDVDIGGER…KLCVIAECGE (165 aa)). The residue at position 171 (lysine 171) is an N6-acetyllysine. The tract at residues 185-215 (KEGDEWGIFPKDGSGDSHPDFPEDADIDLKD) is chaperone activity. Serine 198 bears the Phosphoserine mark. The tract at residues 214–370 (KDVDKILLIS…EKAVYAKMFA (157 aa)) is interaction with HSP90AB1. TPR repeat units follow at residues 223-256 (SEDL…LDSS), 273-306 (LSCV…DPSN), and 308-340 (KALY…APGD).

This sequence belongs to the cyclophilin-type PPIase family. PPIase D subfamily. In terms of assembly, identified in ESR1 or NR3C1/GCR steroid receptor-chaperone complexes. Found in HSP90 chaperone complexes with kinase clients LCK or EIF2AK1. Two monomers associate with one HSP90 homodimer. Interacts with HSP90AA1. Interacts with HSP90AB1; PPID and FKBP4 compete for binding to HSP90AB1 and the interaction is mutually exclusive with the PPID:HSPA8 interaction. Interacts with HSPA8; PPID and STIP1 but not FKBP4 compete for binding to HSPA8 and the interaction is mutually exclusive with the PPID:HSP90AB1 interaction. Interacts with S100A1 and S100A2; the interactions dissociate the PPID:HSP90AA1 interaction. Interacts with S100A6. Interacts with MYB, ILF2, XRCC6, RACK1 and RPS3. Interacts with cytoplasmic dynein 1 intermediate chain (DYNC1I1 or DYNC1I2).

Its subcellular location is the cytoplasm. It is found in the nucleus. The protein localises to the nucleolus. It localises to the nucleoplasm. It carries out the reaction [protein]-peptidylproline (omega=180) = [protein]-peptidylproline (omega=0). Its activity is regulated as follows. Less sensitive to inhibition by cyclosporin A than is CYP-18. In terms of biological role, PPIase that catalyzes the cis-trans isomerization of proline imidic peptide bonds in oligopeptides and may therefore assist protein folding. Proposed to act as a co-chaperone in HSP90 complexes such as in unligated steroid receptors heterocomplexes. Different co-chaperones seem to compete for association with HSP90 thus establishing distinct HSP90-co-chaperone-receptor complexes with the potential to exert tissue-specific receptor activity control. May have a preference for estrogen receptor complexes and is not found in glucocorticoid receptor complexes. May be involved in cytoplasmic dynein-dependent movement of the receptor from the cytoplasm to the nucleus. May regulate MYB by inhibiting its DNA-binding activity. Involved in regulation of AHR signaling by promoting the formation of the AHR:ARNT dimer; the function is independent of HSP90 but requires the chaperone activity region. Involved in regulation of UV radiation-induced apoptosis. The protein is Peptidyl-prolyl cis-trans isomerase D of Rattus norvegicus (Rat).